The sequence spans 497 residues: Galactose-1-phosphate uridylyltransferase (497 aa).

Belongs to the galactose-1-phosphate uridylyltransferase type 2 family.

The protein localises to the cytoplasm. It catalyses the reaction alpha-D-galactose 1-phosphate + UDP-alpha-D-glucose = alpha-D-glucose 1-phosphate + UDP-alpha-D-galactose. It functions in the pathway carbohydrate metabolism; galactose metabolism. The protein is Galactose-1-phosphate uridylyltransferase of Clostridium acetobutylicum (strain ATCC 824 / DSM 792 / JCM 1419 / IAM 19013 / LMG 5710 / NBRC 13948 / NRRL B-527 / VKM B-1787 / 2291 / W).